Reading from the N-terminus, the 33-residue chain is Cytochrome b6-f complex subunit 8 (33 aa).

Residues 2-22 (IFQIGWAALAAIFTFSIAMVV) traverse the membrane as a helical segment.

It belongs to the PetN family. The 4 large subunits of the cytochrome b6-f complex are cytochrome b6, subunit IV (17 kDa polypeptide, PetD), cytochrome f and the Rieske protein, while the 4 small subunits are PetG, PetL, PetM and PetN. The complex functions as a dimer.

The protein resides in the cellular thylakoid membrane. Component of the cytochrome b6-f complex, which mediates electron transfer between photosystem II (PSII) and photosystem I (PSI), cyclic electron flow around PSI, and state transitions. This is Cytochrome b6-f complex subunit 8 from Prochlorococcus marinus (strain MIT 9301).